Reading from the N-terminus, the 355-residue chain is tRNA uridine(34) hydroxylase (355 aa).

In terms of domain architecture, Rhodanese spans aspartate 146–leucine 240. Cysteine 200 acts as the Cysteine persulfide intermediate in catalysis.

This sequence belongs to the TrhO family.

The catalysed reaction is uridine(34) in tRNA + AH2 + O2 = 5-hydroxyuridine(34) in tRNA + A + H2O. In terms of biological role, catalyzes oxygen-dependent 5-hydroxyuridine (ho5U) modification at position 34 in tRNAs. The protein is tRNA uridine(34) hydroxylase of Pectobacterium atrosepticum (strain SCRI 1043 / ATCC BAA-672) (Erwinia carotovora subsp. atroseptica).